The chain runs to 207 residues: Outer-membrane lipoprotein LolB (207 aa).

A signal peptide spans 1 to 21 (MTLPDFRLIRLLPLASLVLTA). Cys22 carries the N-palmitoyl cysteine lipid modification. Cys22 is lipidated: S-diacylglycerol cysteine.

This sequence belongs to the LolB family. Monomer.

Its subcellular location is the cell outer membrane. In terms of biological role, plays a critical role in the incorporation of lipoproteins in the outer membrane after they are released by the LolA protein. This chain is Outer-membrane lipoprotein LolB, found in Salmonella typhi.